Consider the following 874-residue polypeptide: AP-1 complex subunit gamma-1 (874 aa).

The region spanning 761 to 873 is the GAE domain; the sequence is TVAKSHTVYT…QDQTDWAQPS (113 aa).

Belongs to the adaptor complexes large subunit family. In terms of assembly, adaptor protein complex 1 (AP-1) is a heterotetramer composed of two large adaptins (gamma-type subunit APL4 and beta-type subunit APL2), a medium adaptin (mu-type subunit APM1) and a small adaptin (sigma-type subunit APS1). AP-1 interacts with clathrin.

Its subcellular location is the cytoplasmic vesicle. It localises to the clathrin-coated vesicle membrane. It is found in the golgi apparatus. Adaptins are components of the adaptor complexes which link clathrin to receptors in coated vesicles. Clathrin-associated protein complexes are believed to interact with the cytoplasmic tails of membrane proteins, leading to their selection and concentration. The AP-1 complex interacts directly with clathrin. Required for apical growth extension. In Mycosarcoma maydis (Corn smut fungus), this protein is AP-1 complex subunit gamma-1 (APL4).